The following is a 213-amino-acid chain: MNDTSDIKHTSQLTSGDFTEASEPFALFAAWFAEAVASEPNDPDAMALATADADGLPDVRMVLMKGYDTQGFVFYSHIASAKGRELAANPKAALLFHWKSLRRQVRLRGPVTPVTDAEADAYFATRPKQAQIGAWASKQSQPLESRFAFEQAIAKQAAKYIIGSVPRPPGWRGWRITPAQFEFWHDRPFRLHDRIEFRRTAPDAPWTKTRLYP.

Residues Arg-60–Lys-65, Tyr-75–Ser-76, Lys-82, and Gln-104 contribute to the FMN site. Residue Lys-65 coordinates substrate. Substrate-binding residues include Tyr-122 and Arg-126. FMN is bound by residues Gln-139 to Ser-140 and Trp-184. Position 190–192 (Arg-190–His-192) interacts with substrate. Residue Arg-194 participates in FMN binding.

It belongs to the pyridoxamine 5'-phosphate oxidase family. As to quaternary structure, homodimer. FMN serves as cofactor.

The catalysed reaction is pyridoxamine 5'-phosphate + O2 + H2O = pyridoxal 5'-phosphate + H2O2 + NH4(+). It catalyses the reaction pyridoxine 5'-phosphate + O2 = pyridoxal 5'-phosphate + H2O2. The protein operates within cofactor metabolism; pyridoxal 5'-phosphate salvage; pyridoxal 5'-phosphate from pyridoxamine 5'-phosphate: step 1/1. It participates in cofactor metabolism; pyridoxal 5'-phosphate salvage; pyridoxal 5'-phosphate from pyridoxine 5'-phosphate: step 1/1. Functionally, catalyzes the oxidation of either pyridoxine 5'-phosphate (PNP) or pyridoxamine 5'-phosphate (PMP) into pyridoxal 5'-phosphate (PLP). This is Pyridoxine/pyridoxamine 5'-phosphate oxidase from Nitrobacter hamburgensis (strain DSM 10229 / NCIMB 13809 / X14).